The following is a 307-amino-acid chain: Aspartate carbamoyltransferase catalytic subunit (307 aa).

Carbamoyl phosphate-binding residues include R59 and T60. L-aspartate is bound at residue K87. Carbamoyl phosphate contacts are provided by R109, H137, and Q140. L-aspartate is bound by residues R170 and R224. 2 residues coordinate carbamoyl phosphate: G265 and P266.

Belongs to the aspartate/ornithine carbamoyltransferase superfamily. ATCase family. As to quaternary structure, heterododecamer (2C3:3R2) of six catalytic PyrB chains organized as two trimers (C3), and six regulatory PyrI chains organized as three dimers (R2).

The catalysed reaction is carbamoyl phosphate + L-aspartate = N-carbamoyl-L-aspartate + phosphate + H(+). The protein operates within pyrimidine metabolism; UMP biosynthesis via de novo pathway; (S)-dihydroorotate from bicarbonate: step 2/3. Functionally, catalyzes the condensation of carbamoyl phosphate and aspartate to form carbamoyl aspartate and inorganic phosphate, the committed step in the de novo pyrimidine nucleotide biosynthesis pathway. This is Aspartate carbamoyltransferase catalytic subunit from Cytophaga hutchinsonii (strain ATCC 33406 / DSM 1761 / CIP 103989 / NBRC 15051 / NCIMB 9469 / D465).